Here is a 110-residue protein sequence, read N- to C-terminus: Nucleoid-associated protein PERMA_0533 (110 aa).

This sequence belongs to the YbaB/EbfC family. Homodimer.

Its subcellular location is the cytoplasm. The protein localises to the nucleoid. In terms of biological role, binds to DNA and alters its conformation. May be involved in regulation of gene expression, nucleoid organization and DNA protection. The polypeptide is Nucleoid-associated protein PERMA_0533 (Persephonella marina (strain DSM 14350 / EX-H1)).